We begin with the raw amino-acid sequence, 523 residues long: NAD(P)H-quinone oxidoreductase subunit 2 (523 aa).

13 helical membrane passes run Val-30 to Gly-50, Trp-57 to Trp-77, Leu-94 to Trp-114, Ala-128 to Val-148, Leu-182 to Leu-202, Ala-223 to Phe-243, Pro-255 to Leu-275, Leu-291 to Gln-311, Met-317 to Thr-337, Val-345 to Phe-365, Leu-389 to Gly-409, Val-424 to Ile-444, and Val-477 to Phe-497.

It belongs to the complex I subunit 2 family. In terms of assembly, NDH-1 can be composed of about 15 different subunits; different subcomplexes with different compositions have been identified which probably have different functions.

It is found in the cellular thylakoid membrane. It carries out the reaction a plastoquinone + NADH + (n+1) H(+)(in) = a plastoquinol + NAD(+) + n H(+)(out). The enzyme catalyses a plastoquinone + NADPH + (n+1) H(+)(in) = a plastoquinol + NADP(+) + n H(+)(out). In terms of biological role, NDH-1 shuttles electrons from an unknown electron donor, via FMN and iron-sulfur (Fe-S) centers, to quinones in the respiratory and/or the photosynthetic chain. The immediate electron acceptor for the enzyme in this species is believed to be plastoquinone. Couples the redox reaction to proton translocation, and thus conserves the redox energy in a proton gradient. Cyanobacterial NDH-1 also plays a role in inorganic carbon-concentration. The chain is NAD(P)H-quinone oxidoreductase subunit 2 from Synechococcus sp. (strain CC9311).